The sequence spans 193 residues: Ion-translocating oxidoreductase complex subunit B (193 aa).

Residues 1–26 (MSTMLIAVILLTLLALFFGVLLGFAA) are hydrophobic. Positions 32–90 (EGNPIVDELEAILPQTQCGQCGYPGCRPYAEAIANGDKVNKCPPGGTATMEKLASLMGV) constitute a 4Fe-4S domain. Residues Cys-49, Cys-52, Cys-57, Cys-73, Cys-114, Cys-117, Cys-120, Cys-124, Cys-144, Cys-147, Cys-150, and Cys-154 each contribute to the [4Fe-4S] cluster site. 4Fe-4S ferredoxin-type domains lie at 105-134 (KVAY…GAGK) and 136-164 (MHTV…MVPV).

The protein belongs to the 4Fe4S bacterial-type ferredoxin family. RnfB subfamily. In terms of assembly, the complex is composed of six subunits: RnfA, RnfB, RnfC, RnfD, RnfE and RnfG. [4Fe-4S] cluster is required as a cofactor.

It localises to the cell inner membrane. Part of a membrane-bound complex that couples electron transfer with translocation of ions across the membrane. This is Ion-translocating oxidoreductase complex subunit B from Shewanella oneidensis (strain ATCC 700550 / JCM 31522 / CIP 106686 / LMG 19005 / NCIMB 14063 / MR-1).